The following is a 293-amino-acid chain: MKFLTAASLLTLSSSALAAIKDIQLYAQSSNNEVNDFGISSRHEGAALNYLFLAAPGVAENLKYDDETKTVYTELKAGSSTVRQPLNVGNTVLQLGGSGDGTKVDIAEDGTLSFDGSDSVGAAKNINDPYNYSKDSYAVVKGGDGAIPIKLVAKFTGDDKESASSSSSSAAPEPTASSSEAPKETPVYSNSTVTLYTTYCPLSTTITLTVCSDVCTPTVIETSGSVTVSSVQVPSKTASSEAAPPKTTVDSVSKPAPSGKKPTAAVTSFEGAANALTGGSVAIAVAAAIGLVF.

The first 18 residues, 1 to 18 (MKFLTAASLLTLSSSALA), serve as a signal peptide directing secretion. Asn-131 carries an N-linked (GlcNAc...) asparagine glycan. The interval 161-187 (ESASSSSSSAAPEPTASSSEAPKETPV) is disordered. The span at 163-180 (ASSSSSSAAPEPTASSSE) shows a compositional bias: low complexity. Asn-190 carries N-linked (GlcNAc...) asparagine glycosylation. Residues 233-262 (VPSKTASSEAAPPKTTVDSVSKPAPSGKKP) are disordered. Gly-271 carries the GPI-anchor amidated glycine lipid modification. The propeptide at 272 to 293 (AANALTGGSVAIAVAAAIGLVF) is removed in mature form.

Belongs to the SRP1/TIP1 family. In terms of processing, the GPI-anchor is attached to the protein in the endoplasmic reticulum and serves to target the protein to the cell surface. There, the glucosamine-inositol phospholipid moiety is cleaved off and the GPI-modified mannoprotein is covalently attached via its lipidless GPI glycan remnant to the 1,6-beta-glucan of the outer cell wall layer.

It is found in the secreted. Its subcellular location is the cell wall. The protein resides in the membrane. In terms of biological role, component of the cell wall involved in virulence which plays a role in the relationship between C.albicans and the host. Involved in the regulation or assembly of chitin within the cell wall. This Candida albicans (strain SC5314 / ATCC MYA-2876) (Yeast) protein is Cell wall protein PGA31 (PGA31).